A 370-amino-acid chain; its full sequence is Peptidyl-prolyl cis-trans isomerase D (370 aa).

S5 carries the phosphoserine modification. The PPIase cyclophilin-type domain maps to F19–E183. An N6-acetyllysine modification is found at K171. Residues K185–D215 form a chaperone activity region. Position 198 is a phosphoserine (S198). The tract at residues K214–A370 is interaction with HSP90AB1. TPR repeat units follow at residues S223–S256, L273–N306, and T307–D340.

The protein belongs to the cyclophilin-type PPIase family. PPIase D subfamily. As to quaternary structure, identified in ESR1 or NR3C1/GCR steroid receptor-chaperone complexes. Found in HSP90 chaperone complexes with kinase clients LCK or EIF2AK1. Two monomers associate with one HSP90 homodimer. Interacts with HSP90AA1. Interacts with HSP90AB1; PPID and FKBP4 compete for binding to HSP90AB1 and the interaction is mutually exclusive with the PPID:HSPA8 interaction. Interacts with HSPA8; PPID and STIP1 but not FKBP4 compete for binding to HSPA8 and the interaction is mutually exclusive with the PPID:HSP90AB1 interaction. Interacts with S100A1 and S100A2; the interactions dissociate the PPID:HSP90AA1 interaction. Interacts with S100A6. Interacts with MYB, ILF2, XRCC6, RACK1 and RPS3. Interacts with cytoplasmic dynein 1 intermediate chain (DYNC1I1 or DYNC1I2).

The protein localises to the cytoplasm. The protein resides in the nucleus. Its subcellular location is the nucleolus. It is found in the nucleoplasm. It carries out the reaction [protein]-peptidylproline (omega=180) = [protein]-peptidylproline (omega=0). Less sensitive to inhibition by cyclosporin A than is CYP-18. In terms of biological role, PPIase that catalyzes the cis-trans isomerization of proline imidic peptide bonds in oligopeptides and may therefore assist protein folding. Proposed to act as a co-chaperone in HSP90 complexes such as in unligated steroid receptors heterocomplexes. Different co-chaperones seem to compete for association with HSP90 thus establishing distinct HSP90-co-chaperone-receptor complexes with the potential to exert tissue-specific receptor activity control. May have a preference for estrogen receptor complexes and is not found in glucocorticoid receptor complexes. May be involved in cytoplasmic dynein-dependent movement of the receptor from the cytoplasm to the nucleus. May regulate MYB by inhibiting its DNA-binding activity. Involved in regulation of AHR signaling by promoting the formation of the AHR:ARNT dimer; the function is independent of HSP90 but requires the chaperone activity region. Involved in regulation of UV radiation-induced apoptosis. In Mus musculus (Mouse), this protein is Peptidyl-prolyl cis-trans isomerase D.